A 638-amino-acid polypeptide reads, in one-letter code: Terrein cluster-specific transcription factor terR (638 aa).

A DNA-binding region (zn(2)-C6 fungal-type) is located at residues 50–76; that stretch reads CDMCKSKKVRCDGGTPCSYCNLHDLRC.

It is found in the nucleus. In terms of biological role, transcription factor that regulates specifically the terrein biosynthesis gene cluster. Recognizes CGG direct repeat consensus sequences in the terrein cluster forming the high affinity consensus motif TCGGHHWYHCGGH. This is Terrein cluster-specific transcription factor terR from Aspergillus terreus (strain NIH 2624 / FGSC A1156).